Reading from the N-terminus, the 370-residue chain is tRNA 2-selenouridine synthase (370 aa).

The 125-residue stretch at 12-136 (FLDDVPMMDM…MRTFLLETTQ (125 aa)) folds into the Rhodanese domain. The active-site S-selanylcysteine intermediate is Cys95.

Belongs to the SelU family. Monomer.

The enzyme catalyses 5-methylaminomethyl-2-thiouridine(34) in tRNA + selenophosphate + (2E)-geranyl diphosphate + H2O + H(+) = 5-methylaminomethyl-2-selenouridine(34) in tRNA + (2E)-thiogeraniol + phosphate + diphosphate. It catalyses the reaction 5-methylaminomethyl-2-thiouridine(34) in tRNA + (2E)-geranyl diphosphate = 5-methylaminomethyl-S-(2E)-geranyl-thiouridine(34) in tRNA + diphosphate. It carries out the reaction 5-methylaminomethyl-S-(2E)-geranyl-thiouridine(34) in tRNA + selenophosphate + H(+) = 5-methylaminomethyl-2-(Se-phospho)selenouridine(34) in tRNA + (2E)-thiogeraniol. The catalysed reaction is 5-methylaminomethyl-2-(Se-phospho)selenouridine(34) in tRNA + H2O = 5-methylaminomethyl-2-selenouridine(34) in tRNA + phosphate. Its function is as follows. Involved in the post-transcriptional modification of the uridine at the wobble position (U34) of tRNA(Lys), tRNA(Glu) and tRNA(Gln). Catalyzes the conversion of 2-thiouridine (S2U-RNA) to 2-selenouridine (Se2U-RNA). Acts in a two-step process involving geranylation of 2-thiouridine (S2U) to S-geranyl-2-thiouridine (geS2U) and subsequent selenation of the latter derivative to 2-selenouridine (Se2U) in the tRNA chain. This Pseudomonas putida (strain ATCC 700007 / DSM 6899 / JCM 31910 / BCRC 17059 / LMG 24140 / F1) protein is tRNA 2-selenouridine synthase.